A 147-amino-acid chain; its full sequence is Hemoglobin subunit beta (147 aa).

Position 2 is an N-acetylvaline (Val-2). The Globin domain occupies 3-147 (HLSGEEKSAV…VANALAHKYH (145 aa)). Thr-13 is modified (phosphothreonine). Residue Ser-45 is modified to Phosphoserine. Position 60 is an N6-acetyllysine (Lys-60). Position 64 (His-64) interacts with heme b. The residue at position 83 (Lys-83) is an N6-acetyllysine. His-93 is a heme b binding site. Cys-94 bears the S-nitrosocysteine mark. At Lys-145 the chain carries N6-acetyllysine.

This sequence belongs to the globin family. Heterotetramer of two alpha chains and two beta chains. In terms of tissue distribution, red blood cells.

Its function is as follows. Involved in oxygen transport from the lung to the various peripheral tissues. In Lepus europaeus (European hare), this protein is Hemoglobin subunit beta (HBB).